A 334-amino-acid chain; its full sequence is Holliday junction branch migration complex subunit RuvB (334 aa).

The large ATPase domain (RuvB-L) stretch occupies residues 4 to 184 (ADRIISASPK…FGIVQRLEFY (181 aa)). Residues Ile23, Arg24, Gly65, Lys68, Thr69, Thr70, 131-133 (EDY), Arg174, Tyr184, and Arg221 contribute to the ATP site. Mg(2+) is bound at residue Thr69. Residues 185–255 (SVDDLTSIVK…IAKQALAMLD (71 aa)) are small ATPAse domain (RuvB-S). Residues 258–334 (SEGFDFMDIK…YAHLGIAKLD (77 aa)) form a head domain (RuvB-H) region. 3 residues coordinate DNA: Arg294, Arg313, and Arg318.

It belongs to the RuvB family. Homohexamer. Forms an RuvA(8)-RuvB(12)-Holliday junction (HJ) complex. HJ DNA is sandwiched between 2 RuvA tetramers; dsDNA enters through RuvA and exits via RuvB. An RuvB hexamer assembles on each DNA strand where it exits the tetramer. Each RuvB hexamer is contacted by two RuvA subunits (via domain III) on 2 adjacent RuvB subunits; this complex drives branch migration. In the full resolvosome a probable DNA-RuvA(4)-RuvB(12)-RuvC(2) complex forms which resolves the HJ.

Its subcellular location is the cytoplasm. The enzyme catalyses ATP + H2O = ADP + phosphate + H(+). Functionally, the RuvA-RuvB-RuvC complex processes Holliday junction (HJ) DNA during genetic recombination and DNA repair, while the RuvA-RuvB complex plays an important role in the rescue of blocked DNA replication forks via replication fork reversal (RFR). RuvA specifically binds to HJ cruciform DNA, conferring on it an open structure. The RuvB hexamer acts as an ATP-dependent pump, pulling dsDNA into and through the RuvAB complex. RuvB forms 2 homohexamers on either side of HJ DNA bound by 1 or 2 RuvA tetramers; 4 subunits per hexamer contact DNA at a time. Coordinated motions by a converter formed by DNA-disengaged RuvB subunits stimulates ATP hydrolysis and nucleotide exchange. Immobilization of the converter enables RuvB to convert the ATP-contained energy into a lever motion, pulling 2 nucleotides of DNA out of the RuvA tetramer per ATP hydrolyzed, thus driving DNA branch migration. The RuvB motors rotate together with the DNA substrate, which together with the progressing nucleotide cycle form the mechanistic basis for DNA recombination by continuous HJ branch migration. Branch migration allows RuvC to scan DNA until it finds its consensus sequence, where it cleaves and resolves cruciform DNA. The sequence is that of Holliday junction branch migration complex subunit RuvB from Actinobacillus pleuropneumoniae serotype 5b (strain L20).